A 168-amino-acid chain; its full sequence is Envelope glycoprotein L (168 aa).

The signal sequence occupies residues 1–22; the sequence is MMWKWVTLLLFVLVCGDNPVNA. An interaction with gH region spans residues 25–138; that stretch reads HNPFVCCHQK…TDSSGFKNNL (114 aa).

The protein belongs to the herpesviridae glycoprotein L family. Interacts with glycoprotein H (gH); this interaction is necessary for the correct processing and cell surface expression of gH. The heterodimer gH/gL seems to interact with gB trimers during fusion.

It is found in the virion membrane. The protein resides in the host cell membrane. It localises to the host Golgi apparatus. Its subcellular location is the host trans-Golgi network. In terms of biological role, the heterodimer glycoprotein H-glycoprotein L is required for the fusion of viral and plasma membranes leading to virus entry into the host cell. Acts as a functional inhibitor of gH and maintains gH in an inhibited form. Upon binding to host integrins, gL dissociates from gH leading to activation of the viral fusion glycoproteins gB and gH. In Connochaetes taurinus (Blue wildebeest), this protein is Envelope glycoprotein L.